The sequence spans 205 residues: Methylthioribulose-1-phosphate dehydratase (205 aa).

The Zn(2+) site is built by histidine 95 and histidine 97.

It belongs to the aldolase class II family. MtnB subfamily. The cofactor is Zn(2+).

The catalysed reaction is 5-(methylsulfanyl)-D-ribulose 1-phosphate = 5-methylsulfanyl-2,3-dioxopentyl phosphate + H2O. It functions in the pathway amino-acid biosynthesis; L-methionine biosynthesis via salvage pathway; L-methionine from S-methyl-5-thio-alpha-D-ribose 1-phosphate: step 2/6. In terms of biological role, catalyzes the dehydration of methylthioribulose-1-phosphate (MTRu-1-P) into 2,3-diketo-5-methylthiopentyl-1-phosphate (DK-MTP-1-P). In Microcystis aeruginosa (strain NIES-843 / IAM M-2473), this protein is Methylthioribulose-1-phosphate dehydratase.